The primary structure comprises 241 residues: Major prion protein (241 aa).

Residues 1–15 (MLVLFVATWSDLGLC) form the signal peptide. The tract at residues 16 to 31 (KKRPKPGGWNTGGSRY) is interaction with ADGRG6. The interval 16–223 (KKRPKPGGWN…ESQAYYQRGS (208 aa)) is interaction with GRB2, ERI3 and SYN1. Positions 18–101 (RPKPGGWNTG…WHKPNKPKTS (84 aa)) are disordered. A run of 5 repeats spans residues 44 to 52 (PQGGGGWGQ), 53 to 60 (PHGGGWGQ), 61 to 68 (PHGGGWGQ), 69 to 76 (PHGGGWGQ), and 77 to 84 (PHGGGWGQ). The interval 44-84 (PQGGGGWGQPHGGGWGQPHGGGWGQPHGGGWGQPHGGGWGQ) is 5 X 8 AA tandem repeats of P-H-G-G-G-W-G-Q. The segment covering 45–88 (QGGGGWGQPHGGGWGQPHGGGWGQPHGGGWGQPHGGGWGQGGGT) has biased composition (gly residues). Cu(2+)-binding residues include H54, G55, G56, H62, G63, G64, H70, G71, G72, H78, G79, and G80. Over residues 91–101 (QWHKPNKPKTS) the composition is skewed to basic residues. Residues C172 and C207 are joined by a disulfide bond. N-linked (GlcNAc...) asparagine glycosylation is found at N174 and N190. S223 carries GPI-anchor amidated serine lipidation. A propeptide spans 224–241 (SMVLFSSPPVILLISFLI) (removed in mature form).

Belongs to the prion family. Monomer and homodimer. Has a tendency to aggregate into amyloid fibrils containing a cross-beta spine, formed by a steric zipper of superposed beta-strands. Soluble oligomers may represent an intermediate stage on the path to fibril formation. Copper binding may promote oligomerization. Interacts with GRB2, APP, ERI3/PRNPIP and SYN1. Mislocalized cytosolically exposed PrP interacts with MGRN1; this interaction alters MGRN1 subcellular location and causes lysosomal enlargement. Interacts with APP. Interacts with KIAA1191. Interacts with ADGRG6.

Its subcellular location is the cell membrane. It localises to the golgi apparatus. Its function is as follows. Its primary physiological function is unclear. May play a role in neuronal development and synaptic plasticity. May be required for neuronal myelin sheath maintenance. May promote myelin homeostasis through acting as an agonist for ADGRG6 receptor. May play a role in iron uptake and iron homeostasis. Soluble oligomers are toxic to cultured neuroblastoma cells and induce apoptosis (in vitro). Association with GPC1 (via its heparan sulfate chains) targets PRNP to lipid rafts. Also provides Cu(2+) or Zn(2+) for the ascorbate-mediated GPC1 deaminase degradation of its heparan sulfate side chains. In Mandrillus sphinx (Mandrill), this protein is Major prion protein (PRNP).